The following is a 256-amino-acid chain: uncharacterized protein (256 aa).

The N-terminal stretch at 1 to 23 (MKRLNKLVLGIIFLFLVISITAG) is a signal peptide. Cys-24 carries the N-palmitoyl cysteine lipid modification. A lipid anchor (S-diacylglycerol cysteine) is attached at Cys-24.

It belongs to the staphylococcal tandem lipoprotein family.

It localises to the cell membrane. This is an uncharacterized protein from Staphylococcus aureus (strain COL).